The following is a 359-amino-acid chain: 4-hydroxy-3-methylbut-2-en-1-yl diphosphate synthase (flavodoxin) (359 aa).

[4Fe-4S] cluster contacts are provided by C263, C266, C298, and E305.

Belongs to the IspG family. [4Fe-4S] cluster serves as cofactor.

The catalysed reaction is (2E)-4-hydroxy-3-methylbut-2-enyl diphosphate + oxidized [flavodoxin] + H2O + 2 H(+) = 2-C-methyl-D-erythritol 2,4-cyclic diphosphate + reduced [flavodoxin]. It participates in isoprenoid biosynthesis; isopentenyl diphosphate biosynthesis via DXP pathway; isopentenyl diphosphate from 1-deoxy-D-xylulose 5-phosphate: step 5/6. Functionally, converts 2C-methyl-D-erythritol 2,4-cyclodiphosphate (ME-2,4cPP) into 1-hydroxy-2-methyl-2-(E)-butenyl 4-diphosphate. In Wolinella succinogenes (strain ATCC 29543 / DSM 1740 / CCUG 13145 / JCM 31913 / LMG 7466 / NCTC 11488 / FDC 602W) (Vibrio succinogenes), this protein is 4-hydroxy-3-methylbut-2-en-1-yl diphosphate synthase (flavodoxin).